The primary structure comprises 324 residues: Methionyl-tRNA formyltransferase (324 aa).

A (6S)-5,6,7,8-tetrahydrofolate-binding site is contributed by 113–116 (SLLP).

The protein belongs to the Fmt family.

It carries out the reaction L-methionyl-tRNA(fMet) + (6R)-10-formyltetrahydrofolate = N-formyl-L-methionyl-tRNA(fMet) + (6S)-5,6,7,8-tetrahydrofolate + H(+). Functionally, attaches a formyl group to the free amino group of methionyl-tRNA(fMet). The formyl group appears to play a dual role in the initiator identity of N-formylmethionyl-tRNA by promoting its recognition by IF2 and preventing the misappropriation of this tRNA by the elongation apparatus. The sequence is that of Methionyl-tRNA formyltransferase from Bacteroides fragilis (strain ATCC 25285 / DSM 2151 / CCUG 4856 / JCM 11019 / LMG 10263 / NCTC 9343 / Onslow / VPI 2553 / EN-2).